The sequence spans 388 residues: MKKILLLGSGELGKEFVISAQRKGQHIIACDSYAGAPAMQVADECEVFDMLNGEELERIVKKHRPDIIVPEIEAIRTERLYDFEKEGIQVVPSARAVNYTMNRKAIRDLAAKELGLKTAKYYYAKSLEELKEAAEKIGFPCVVKPLMSSSGKGQSLVKSAAELEHAWEYGCNGSRGDIRELIIEEFIKFDSEITLLTVTQKNGPTLFCPPIGHVQKGGDYRESFQPAHIDPAHLKEAEDMAEKVTRALTGAGLWGVEFFLSHENGVYFSELSPRPHDTGMVTLAGTQNLNEFELHLRAVLGLPIPGIKQERIGASAVILSPIASQERPQYRGMEEVTGEEDTYLRIFGKPYTRVNRRMGVVLCYAPNGSDLDALRDKAKRIADKVEVY.

Residues glutamate 11–leucine 12 and glutamate 71 contribute to the N(1)-(5-phospho-beta-D-ribosyl)glycinamide site. ATP contacts are provided by residues arginine 103, lysine 144, serine 149–glutamine 154, glutamate 184–isoleucine 187, and glutamate 192. The 193-residue stretch at aspartate 108–leucine 300 folds into the ATP-grasp domain. Residues glutamate 257 and glutamate 270 each contribute to the Mg(2+) site. N(1)-(5-phospho-beta-D-ribosyl)glycinamide is bound by residues aspartate 277, lysine 349, and arginine 356–arginine 357.

This sequence belongs to the PurK/PurT family. Homodimer.

It carries out the reaction N(1)-(5-phospho-beta-D-ribosyl)glycinamide + formate + ATP = N(2)-formyl-N(1)-(5-phospho-beta-D-ribosyl)glycinamide + ADP + phosphate + H(+). Its pathway is purine metabolism; IMP biosynthesis via de novo pathway; N(2)-formyl-N(1)-(5-phospho-D-ribosyl)glycinamide from N(1)-(5-phospho-D-ribosyl)glycinamide (formate route): step 1/1. Its function is as follows. Involved in the de novo purine biosynthesis. Catalyzes the transfer of formate to 5-phospho-ribosyl-glycinamide (GAR), producing 5-phospho-ribosyl-N-formylglycinamide (FGAR). Formate is provided by PurU via hydrolysis of 10-formyl-tetrahydrofolate. The sequence is that of Formate-dependent phosphoribosylglycinamide formyltransferase from Bacteroides fragilis (strain ATCC 25285 / DSM 2151 / CCUG 4856 / JCM 11019 / LMG 10263 / NCTC 9343 / Onslow / VPI 2553 / EN-2).